Reading from the N-terminus, the 320-residue chain is FHA domain-containing protein FHA2 (320 aa).

Residue Ala-2 is modified to N-acetylalanine. The FHA domain maps to 32–89 (IILGRNSKKATVDVDLSSLGGGMNISRNHARIFYDFTRRRFSLEVLGKNGCLVEGVLH). The disordered stretch occupies residues 138 to 211 (VPYHNYQSGP…REGRSKVDRE (74 aa)). Residues 163–178 (EYDDEDDDDDDDEEDD) show a composition bias toward acidic residues. A compositionally biased stretch (basic and acidic residues) spans 198-210 (GEKKREGRSKVDR).

As to expression, widely expressed.

The protein localises to the nucleus. Functionally, may play a role in the control of plant organ development and specifically in the regulation of stamen development. Does not show transactivation activity in yeast. This chain is FHA domain-containing protein FHA2, found in Arabidopsis thaliana (Mouse-ear cress).